Reading from the N-terminus, the 196-residue chain is UMP-CMP kinase (196 aa).

An ATP-binding site is contributed by 13–18 (GAGKGT). Serine 33 carries the phosphoserine modification. Residues 33–63 (SAGELLRDERKNPDSQYGELIEKYIKEGKIV) form an NMP region. Arginine 39 is a binding site for a ribonucleoside 5'-phosphate. Residues lysine 43 and lysine 55 each carry the N6-acetyllysine modification. 61 to 63 (KIV) contributes to the a ribonucleoside 5'-phosphate binding site. Residue lysine 73 forms a Glycyl lysine isopeptide (Lys-Gly) (interchain with G-Cter in SUMO2) linkage. 93 to 96 (GFPR) contributes to the a ribonucleoside 5'-phosphate binding site. Asparagine 100 lines the CMP pocket. An N6-succinyllysine modification is found at lysine 106. Residues 133 to 143 (ERGKSSGRSDD) are LID. ATP is bound at residue arginine 134. 2 residues coordinate a ribonucleoside 5'-phosphate: arginine 140 and arginine 151. ATP is bound at residue lysine 179. A Phosphoserine modification is found at serine 180.

This sequence belongs to the adenylate kinase family. UMP-CMP kinase subfamily. As to quaternary structure, monomer. It depends on Mg(2+) as a cofactor. Ubiquitously expressed.

The protein resides in the nucleus. It localises to the cytoplasm. The catalysed reaction is CMP + ATP = CDP + ADP. It catalyses the reaction dCMP + ATP = dCDP + ADP. It carries out the reaction UMP + ATP = UDP + ADP. The enzyme catalyses a 2'-deoxyribonucleoside 5'-diphosphate + ATP = a 2'-deoxyribonucleoside 5'-triphosphate + ADP. The catalysed reaction is a ribonucleoside 5'-diphosphate + ATP = a ribonucleoside 5'-triphosphate + ADP. Its function is as follows. Catalyzes the phosphorylation of pyrimidine nucleoside monophosphates at the expense of ATP. Plays an important role in de novo pyrimidine nucleotide biosynthesis. Has preference for UMP and CMP as phosphate acceptors. Also displays broad nucleoside diphosphate kinase activity. This is UMP-CMP kinase from Homo sapiens (Human).